The following is a 240-amino-acid chain: Ribonuclease HII (240 aa).

The RNase H type-2 domain occupies 27 to 226 (GPVAGVDEAG…GETRSLRLED (200 aa)). A divalent metal cation contacts are provided by D33, E34, and D127.

This sequence belongs to the RNase HII family. It depends on Mn(2+) as a cofactor. The cofactor is Mg(2+).

The protein localises to the cytoplasm. It carries out the reaction Endonucleolytic cleavage to 5'-phosphomonoester.. Functionally, endonuclease that specifically degrades the RNA of RNA-DNA hybrids. This Parafrankia sp. (strain EAN1pec) protein is Ribonuclease HII.